A 126-amino-acid polypeptide reads, in one-letter code: Large ribosomal subunit protein bL17 (126 aa).

It belongs to the bacterial ribosomal protein bL17 family. Part of the 50S ribosomal subunit. Contacts protein L32.

The protein is Large ribosomal subunit protein bL17 of Laribacter hongkongensis (strain HLHK9).